Consider the following 578-residue polypeptide: Penicillin-binding protein activator LpoA (578 aa).

An N-terminal signal peptide occupies residues 1–30; the sequence is MPTILVQSYGFRQKMKTIFIPTALALLLAA. The N-palmitoyl cysteine moiety is linked to residue Cys-31. Residue Cys-31 is the site of S-diacylglycerol cysteine attachment.

It belongs to the LpoA family. Interacts with PBP1a.

It is found in the cell outer membrane. Its function is as follows. Regulator of peptidoglycan synthesis that is essential for the function of penicillin-binding protein 1A (PBP1a). The sequence is that of Penicillin-binding protein activator LpoA from Glaesserella parasuis serovar 5 (strain SH0165) (Haemophilus parasuis).